Reading from the N-terminus, the 518-residue chain is Vesicular inhibitory amino acid transporter (518 aa).

Residues 1–125 lie on the Cytoplasmic side of the membrane; the sequence is MATLIRSKLS…WNVTNAIQGM (125 aa). A disordered region spans residues 66–98; it reads EVPSGDPTAEGDSHYQRDGTGPPSSASKDEGLC. A helical membrane pass occupies residues 126-146; that stretch reads FVLGLPYAILHGGYLGLFLII. Residues 147–197 lie on the Lumenal, vesicle side of the membrane; sequence FAAVVCCYTGKILIACLYEENEDGETVRVRDSYVDIANACCAPRFPKLGGR. Residues 198–218 traverse the membrane as a helical segment; it reads VVNVAQIIELVMTCILYVVVS. The Cytoplasmic portion of the chain corresponds to 219–258; that stretch reads GNLMYNSFPSLPISQKSWSIIATAMLLPCAFLKNLKAVSK. Residues 259–279 traverse the membrane as a helical segment; it reads FSLLCTLAHFVINVLVIAYCL. At 280–298 the chain is on the lumenal, vesicle side; sequence SRARDWAWDKVKFYIDVKK. The chain crosses the membrane as a helical span at residues 299–319; sequence FPISIGIIVFSYTSQIFLPSL. Residues 320 to 334 lie on the Cytoplasmic side of the membrane; sequence EGNMQSPKEFHCMMN. The chain crosses the membrane as a helical span at residues 335–355; sequence WTHIAACILKGLFALVAYLTW. At 356-376 the chain is on the lumenal, vesicle side; it reads ADETKEVITDNLPSTIRAVVN. The helical transmembrane segment at 377–397 threads the bilayer; the sequence is LFLVAKALLSYPLPFFAAVEV. At 398-431 the chain is on the cytoplasmic side; the sequence is LEKSLFQEGARAFFPNCYGGDGRLKSWGLTLRCA. The chain crosses the membrane as a helical span at residues 432-452; that stretch reads LVVFTLLMAIYVPHFALLMGL. At 453-454 the chain is on the lumenal, vesicle side; it reads TG. The chain crosses the membrane as a helical span at residues 455 to 475; sequence SLTGAGLCFLLPSLFHLKLLW. Over 476–482 the chain is Cytoplasmic; it reads RKLQWHQ. A helical membrane pass occupies residues 483–503; sequence VFFDVSIFVIGSICSVSGFVH. The Lumenal, vesicle portion of the chain corresponds to 504–518; sequence SLEGLIEAFRFNIED.

It belongs to the amino acid/polyamine transporter 2 family.

The protein localises to the cytoplasmic vesicle membrane. It is found in the presynapse. The enzyme catalyses 4-aminobutanoate(out) + n H(+)(in) = 4-aminobutanoate(in) + n H(+)(out). The catalysed reaction is glycine(out) + n H(+)(in) = glycine(in) + n H(+)(out). It carries out the reaction beta-alanine(out) + n H(+)(in) = beta-alanine(in) + n H(+)(out). Its function is as follows. Antiporter that exchanges vesicular protons for cytosolic 4-aminobutanoate or to a lesser extend glycine, thus allowing their secretion from nerve terminals. The transport is equally dependent on the chemical and electrical components of the proton gradient. May also transport beta-alanine. Acidification of GABAergic synaptic vesicles is a prerequisite for 4-aminobutanoate uptake. This chain is Vesicular inhibitory amino acid transporter, found in Xenopus tropicalis (Western clawed frog).